Here is a 1295-residue protein sequence, read N- to C-terminus: Phosphoribosylformylglycinamidine synthase (1295 aa).

The interval 305–327 is disordered; that stretch reads WPGAATGSGGEIRDEGATGRGAK. ATP-binding positions include 307–318 and alanine 678; that span reads GAATGSGGEIRD. Residues glutamate 718, asparagine 722, and aspartate 884 each coordinate Mg(2+). Serine 886 is an ATP binding site. The 254-residue stretch at 1042–1295 folds into the Glutamine amidotransferase type-1 domain; the sequence is VAVLREQGVN…IFRNARKQLG (254 aa). The active-site Nucleophile is cysteine 1135. Residues histidine 1260 and glutamate 1262 contribute to the active site.

In the N-terminal section; belongs to the FGAMS family. As to quaternary structure, monomer.

The protein resides in the cytoplasm. It carries out the reaction N(2)-formyl-N(1)-(5-phospho-beta-D-ribosyl)glycinamide + L-glutamine + ATP + H2O = 2-formamido-N(1)-(5-O-phospho-beta-D-ribosyl)acetamidine + L-glutamate + ADP + phosphate + H(+). Its pathway is purine metabolism; IMP biosynthesis via de novo pathway; 5-amino-1-(5-phospho-D-ribosyl)imidazole from N(2)-formyl-N(1)-(5-phospho-D-ribosyl)glycinamide: step 1/2. Functionally, phosphoribosylformylglycinamidine synthase involved in the purines biosynthetic pathway. Catalyzes the ATP-dependent conversion of formylglycinamide ribonucleotide (FGAR) and glutamine to yield formylglycinamidine ribonucleotide (FGAM) and glutamate. The sequence is that of Phosphoribosylformylglycinamidine synthase from Shigella sonnei (strain Ss046).